We begin with the raw amino-acid sequence, 385 residues long: T-box transcription factor TBX10 (385 aa).

A disordered region spans residues T22–R61. A DNA-binding region (T-box) is located at residues L69–E252.

It is found in the nucleus. Its function is as follows. Probable transcriptional regulator involved in developmental processes. This is T-box transcription factor TBX10 (TBX10) from Homo sapiens (Human).